The primary structure comprises 245 residues: Probable septum site-determining protein MinC (245 aa).

A compositionally biased stretch (basic and acidic residues) spans 113–132 (RERPLEPLVGEEKKKPEKPP). The segment at 113–138 (RERPLEPLVGEEKKKPEKPPEPTIKP) is disordered.

This sequence belongs to the MinC family. Interacts with MinD and FtsZ.

Functionally, cell division inhibitor that blocks the formation of polar Z ring septums. Rapidly oscillates between the poles of the cell to destabilize FtsZ filaments that have formed before they mature into polar Z rings. Prevents FtsZ polymerization. This chain is Probable septum site-determining protein MinC, found in Pseudomonas fluorescens (strain SBW25).